The sequence spans 493 residues: Alpha-amylase-related protein (493 aa).

The first 19 residues, 1 to 19 (MFKLAFTLTLCLAGSLSLA), serve as a signal peptide directing secretion. A Pyrrolidone carboxylic acid modification is found at Gln20. Cys47 and Cys103 are disulfide-bonded. Ca(2+)-binding residues include Asn117, Gln168, and Asp177. Residues Cys156 and Cys170 are joined by a disulfide bond. Position 205 (Arg205) interacts with chloride. Asp207 functions as the Nucleophile in the catalytic mechanism. His211 provides a ligand contact to Ca(2+). The Proton donor role is filled by Glu244. The chloride site is built by Asn307 and Arg342. Disulfide bonds link Cys375/Cys381, Cys417/Cys440, and Cys447/Cys459.

Belongs to the glycosyl hydrolase 13 family. Monomer. It depends on Ca(2+) as a cofactor. Chloride is required as a cofactor.

The protein localises to the secreted. The catalysed reaction is Endohydrolysis of (1-&gt;4)-alpha-D-glucosidic linkages in polysaccharides containing three or more (1-&gt;4)-alpha-linked D-glucose units.. This is Alpha-amylase-related protein (Amyrel) from Drosophila orena (Fruit fly).